Here is a 130-residue protein sequence, read N- to C-terminus: Large ribosomal subunit protein bL17 (130 aa).

Belongs to the bacterial ribosomal protein bL17 family. In terms of assembly, part of the 50S ribosomal subunit. Contacts protein L32.

This is Large ribosomal subunit protein bL17 from Buchnera aphidicola subsp. Acyrthosiphon pisum (strain 5A).